Reading from the N-terminus, the 209-residue chain is High frequency lysogenization protein HflD homolog (209 aa).

Belongs to the HflD family.

The protein resides in the cytoplasm. It is found in the cell inner membrane. This Sodalis glossinidius (strain morsitans) protein is High frequency lysogenization protein HflD homolog.